Reading from the N-terminus, the 283-residue chain is Pyridoxine/pyridoxal/pyridoxamine kinase (283 aa).

Positions 23 and 59 each coordinate substrate. Residue aspartate 125 coordinates ATP. Tyrosine 136 contacts Mg(2+). ATP is bound by residues threonine 157, glutamate 162, threonine 195, 222–225 (HAHV), and threonine 232. Mg(2+) is bound at residue glutamate 162. Substrate is bound at residue aspartate 234.

Belongs to the pyridoxine kinase family. PdxK subfamily. In terms of assembly, homodimer. The cofactor is Mg(2+).

The enzyme catalyses pyridoxal + ATP = pyridoxal 5'-phosphate + ADP + H(+). The catalysed reaction is pyridoxine + ATP = pyridoxine 5'-phosphate + ADP + H(+). It carries out the reaction pyridoxamine + ATP = pyridoxamine 5'-phosphate + ADP + H(+). Its pathway is cofactor metabolism; pyridoxal 5'-phosphate salvage; pyridoxal 5'-phosphate from pyridoxal: step 1/1. It participates in cofactor metabolism; pyridoxal 5'-phosphate salvage; pyridoxine 5'-phosphate from pyridoxine: step 1/1. It functions in the pathway cofactor metabolism; pyridoxal 5'-phosphate salvage; pyridoxamine 5'-phosphate from pyridoxamine: step 1/1. In terms of biological role, B6-vitamer kinase involved in the salvage pathway of pyridoxal 5'-phosphate (PLP). Catalyzes the phosphorylation of pyridoxine (PN), pyridoxal (PL), and pyridoxamine (PM), forming their respective 5'-phosphorylated esters, i.e. PNP, PLP and PMP. This is Pyridoxine/pyridoxal/pyridoxamine kinase from Bordetella bronchiseptica (strain ATCC BAA-588 / NCTC 13252 / RB50) (Alcaligenes bronchisepticus).